The sequence spans 455 residues: Bifunctional protein GlmU (455 aa).

Residues 1–225 are pyrophosphorylase; that stretch reads MNIVILAAGL…EWETLGVNSK (225 aa). UDP-N-acetyl-alpha-D-glucosamine contacts are provided by residues 6–9, K20, Q71, 76–77, 98–100, G135, E150, N165, and N223; these read LAAG, GT, and YGD. Mg(2+) is bound at residue D100. N223 is a binding site for Mg(2+). A linker region spans residues 226–246; it reads VQLAELERIHQRNLAQQLLED. The segment at 247-455 is N-acetyltransferase; sequence GVTLIDPARI…QRPVKQKKDA (209 aa). 2 residues coordinate UDP-N-acetyl-alpha-D-glucosamine: R329 and K347. H359 serves as the catalytic Proton acceptor. Residues Y362 and N373 each coordinate UDP-N-acetyl-alpha-D-glucosamine. Acetyl-CoA is bound by residues A376, 382 to 383, S401, A419, and R436; that span reads NY.

This sequence in the N-terminal section; belongs to the N-acetylglucosamine-1-phosphate uridyltransferase family. In the C-terminal section; belongs to the transferase hexapeptide repeat family. In terms of assembly, homotrimer. Mg(2+) serves as cofactor.

It localises to the cytoplasm. The enzyme catalyses alpha-D-glucosamine 1-phosphate + acetyl-CoA = N-acetyl-alpha-D-glucosamine 1-phosphate + CoA + H(+). It catalyses the reaction N-acetyl-alpha-D-glucosamine 1-phosphate + UTP + H(+) = UDP-N-acetyl-alpha-D-glucosamine + diphosphate. It participates in nucleotide-sugar biosynthesis; UDP-N-acetyl-alpha-D-glucosamine biosynthesis; N-acetyl-alpha-D-glucosamine 1-phosphate from alpha-D-glucosamine 6-phosphate (route II): step 2/2. Its pathway is nucleotide-sugar biosynthesis; UDP-N-acetyl-alpha-D-glucosamine biosynthesis; UDP-N-acetyl-alpha-D-glucosamine from N-acetyl-alpha-D-glucosamine 1-phosphate: step 1/1. The protein operates within bacterial outer membrane biogenesis; LPS lipid A biosynthesis. Functionally, catalyzes the last two sequential reactions in the de novo biosynthetic pathway for UDP-N-acetylglucosamine (UDP-GlcNAc). The C-terminal domain catalyzes the transfer of acetyl group from acetyl coenzyme A to glucosamine-1-phosphate (GlcN-1-P) to produce N-acetylglucosamine-1-phosphate (GlcNAc-1-P), which is converted into UDP-GlcNAc by the transfer of uridine 5-monophosphate (from uridine 5-triphosphate), a reaction catalyzed by the N-terminal domain. In Ralstonia nicotianae (strain ATCC BAA-1114 / GMI1000) (Ralstonia solanacearum), this protein is Bifunctional protein GlmU.